We begin with the raw amino-acid sequence, 445 residues long: Phosphoglucosamine mutase (445 aa).

Serine 102 acts as the Phosphoserine intermediate in catalysis. Serine 102, aspartate 241, aspartate 243, and aspartate 245 together coordinate Mg(2+). The residue at position 102 (serine 102) is a Phosphoserine.

This sequence belongs to the phosphohexose mutase family. Requires Mg(2+) as cofactor. Post-translationally, activated by phosphorylation.

The catalysed reaction is alpha-D-glucosamine 1-phosphate = D-glucosamine 6-phosphate. Functionally, catalyzes the conversion of glucosamine-6-phosphate to glucosamine-1-phosphate. In Shewanella pealeana (strain ATCC 700345 / ANG-SQ1), this protein is Phosphoglucosamine mutase.